Consider the following 99-residue polypeptide: MEIRIKEIKENKLIGRKEIYFEIYHPGEPTPSRKDVKGKLVAMLDLNPETTVIQYIRSYFGSYISKGYAKAYDSKERMLYIEPEYILIRDGLIEKKEGE.

This sequence belongs to the eukaryotic ribosomal protein eS24 family. In terms of assembly, may be present in 2 copies per 70S ribosome. Part of the 30S ribosomal subunit, where it binds 16S rRNA at its canonical site at the bse of the body, as well as a possible second 50S binding site near 23S rRNA helix 45.

The protein is Small ribosomal subunit protein eS24 of Pyrococcus furiosus (strain ATCC 43587 / DSM 3638 / JCM 8422 / Vc1).